A 342-amino-acid polypeptide reads, in one-letter code: Holliday junction branch migration complex subunit RuvB (342 aa).

Residues 4–182 are large ATPase domain (RuvB-L); the sequence is TDRLLSAGRR…FGIPIRLQFY (179 aa). ATP contacts are provided by L21, R22, G63, K66, T67, T68, R172, Y182, and R219. T67 contacts Mg(2+). The tract at residues 183–253 is small ATPAse domain (RuvB-S); the sequence is TVEELERVVS…VADQSLNRLE (71 aa). The head domain (RuvB-H) stretch occupies residues 256–342; the sequence is NLGLDAMDRR…EAGQDGLFDV (87 aa). DNA-binding residues include R292, R311, and R316.

This sequence belongs to the RuvB family. Homohexamer. Forms an RuvA(8)-RuvB(12)-Holliday junction (HJ) complex. HJ DNA is sandwiched between 2 RuvA tetramers; dsDNA enters through RuvA and exits via RuvB. An RuvB hexamer assembles on each DNA strand where it exits the tetramer. Each RuvB hexamer is contacted by two RuvA subunits (via domain III) on 2 adjacent RuvB subunits; this complex drives branch migration. In the full resolvosome a probable DNA-RuvA(4)-RuvB(12)-RuvC(2) complex forms which resolves the HJ.

It is found in the cytoplasm. The catalysed reaction is ATP + H2O = ADP + phosphate + H(+). Functionally, the RuvA-RuvB-RuvC complex processes Holliday junction (HJ) DNA during genetic recombination and DNA repair, while the RuvA-RuvB complex plays an important role in the rescue of blocked DNA replication forks via replication fork reversal (RFR). RuvA specifically binds to HJ cruciform DNA, conferring on it an open structure. The RuvB hexamer acts as an ATP-dependent pump, pulling dsDNA into and through the RuvAB complex. RuvB forms 2 homohexamers on either side of HJ DNA bound by 1 or 2 RuvA tetramers; 4 subunits per hexamer contact DNA at a time. Coordinated motions by a converter formed by DNA-disengaged RuvB subunits stimulates ATP hydrolysis and nucleotide exchange. Immobilization of the converter enables RuvB to convert the ATP-contained energy into a lever motion, pulling 2 nucleotides of DNA out of the RuvA tetramer per ATP hydrolyzed, thus driving DNA branch migration. The RuvB motors rotate together with the DNA substrate, which together with the progressing nucleotide cycle form the mechanistic basis for DNA recombination by continuous HJ branch migration. Branch migration allows RuvC to scan DNA until it finds its consensus sequence, where it cleaves and resolves cruciform DNA. The chain is Holliday junction branch migration complex subunit RuvB from Rhizorhabdus wittichii (strain DSM 6014 / CCUG 31198 / JCM 15750 / NBRC 105917 / EY 4224 / RW1) (Sphingomonas wittichii).